Consider the following 362-residue polypeptide: Aminomethyltransferase (362 aa).

It belongs to the GcvT family. As to quaternary structure, the glycine cleavage system is composed of four proteins: P, T, L and H.

The enzyme catalyses N(6)-[(R)-S(8)-aminomethyldihydrolipoyl]-L-lysyl-[protein] + (6S)-5,6,7,8-tetrahydrofolate = N(6)-[(R)-dihydrolipoyl]-L-lysyl-[protein] + (6R)-5,10-methylene-5,6,7,8-tetrahydrofolate + NH4(+). In terms of biological role, the glycine cleavage system catalyzes the degradation of glycine. In Colwellia psychrerythraea (strain 34H / ATCC BAA-681) (Vibrio psychroerythus), this protein is Aminomethyltransferase.